The chain runs to 536 residues: CTP synthase (536 aa).

The amidoligase domain stretch occupies residues 1-267; it reads MTKFIFVTGG…DDIVIKRLQL (267 aa). Ser13 lines the CTP pocket. Ser13 serves as a coordination point for UTP. 14 to 19 lines the ATP pocket; that stretch reads SLGKGI. Residue Tyr54 participates in L-glutamine binding. Asp71 serves as a coordination point for ATP. Mg(2+) is bound by residues Asp71 and Glu141. Residues 148–150, 188–193, and Lys224 each bind CTP; these read DIE and KTKPTQ. UTP contacts are provided by residues 188–193 and Lys224; that span reads KTKPTQ. 240-242 is an ATP binding site; that stretch reads RDA. Residues 293–535 enclose the Glutamine amidotransferase type-1 domain; sequence TIGLVGKYVS…IEASLKYQQN (243 aa). Gly355 lines the L-glutamine pocket. Cys382 functions as the Nucleophile; for glutamine hydrolysis in the catalytic mechanism. Residues 383–386, Glu406, and Arg463 each bind L-glutamine; that span reads LGMQ. Residues His508 and Glu510 contribute to the active site.

It belongs to the CTP synthase family. Homotetramer.

The catalysed reaction is UTP + L-glutamine + ATP + H2O = CTP + L-glutamate + ADP + phosphate + 2 H(+). It catalyses the reaction L-glutamine + H2O = L-glutamate + NH4(+). The enzyme catalyses UTP + NH4(+) + ATP = CTP + ADP + phosphate + 2 H(+). Its pathway is pyrimidine metabolism; CTP biosynthesis via de novo pathway; CTP from UDP: step 2/2. Its activity is regulated as follows. Allosterically activated by GTP, when glutamine is the substrate; GTP has no effect on the reaction when ammonia is the substrate. The allosteric effector GTP functions by stabilizing the protein conformation that binds the tetrahedral intermediate(s) formed during glutamine hydrolysis. Inhibited by the product CTP, via allosteric rather than competitive inhibition. Catalyzes the ATP-dependent amination of UTP to CTP with either L-glutamine or ammonia as the source of nitrogen. Regulates intracellular CTP levels through interactions with the four ribonucleotide triphosphates. The polypeptide is CTP synthase (Staphylococcus aureus (strain NCTC 8325 / PS 47)).